A 211-amino-acid chain; its full sequence is Uridine kinase (211 aa).

ATP is bound at residue 12–19; it reads GGSGSGKT.

This sequence belongs to the uridine kinase family.

The protein localises to the cytoplasm. The catalysed reaction is uridine + ATP = UMP + ADP + H(+). The enzyme catalyses cytidine + ATP = CMP + ADP + H(+). It participates in pyrimidine metabolism; CTP biosynthesis via salvage pathway; CTP from cytidine: step 1/3. The protein operates within pyrimidine metabolism; UMP biosynthesis via salvage pathway; UMP from uridine: step 1/1. In Bacillus velezensis (strain DSM 23117 / BGSC 10A6 / LMG 26770 / FZB42) (Bacillus amyloliquefaciens subsp. plantarum), this protein is Uridine kinase.